The following is a 315-amino-acid chain: Transaldolase (315 aa).

The active-site Schiff-base intermediate with substrate is Lys-131.

It belongs to the transaldolase family. Type 1 subfamily. As to quaternary structure, homodimer.

The protein localises to the cytoplasm. It catalyses the reaction D-sedoheptulose 7-phosphate + D-glyceraldehyde 3-phosphate = D-erythrose 4-phosphate + beta-D-fructose 6-phosphate. Its pathway is carbohydrate degradation; pentose phosphate pathway; D-glyceraldehyde 3-phosphate and beta-D-fructose 6-phosphate from D-ribose 5-phosphate and D-xylulose 5-phosphate (non-oxidative stage): step 2/3. Transaldolase is important for the balance of metabolites in the pentose-phosphate pathway. The polypeptide is Transaldolase (Haemophilus ducreyi (strain 35000HP / ATCC 700724)).